Reading from the N-terminus, the 68-residue chain is MKNQFAILLLAVVFLQLISQSDAIWSAIWSGIKGLLGKRGLKNADRLDELFDGDISDADLDFLRELMR.

The N-terminal stretch at 1 to 23 is a signal peptide; sequence MKNQFAILLLAVVFLQLISQSDA. A Leucine amide modification is found at Leu-36. A propeptide spanning residues 40 to 68 is cleaved from the precursor; that stretch reads GLKNADRLDELFDGDISDADLDFLRELMR.

It belongs to the non-disulfide-bridged peptide (NDBP) superfamily. Short antimicrobial peptide (group 4) family. As to expression, expressed by the venom gland.

The protein resides in the secreted. It localises to the target cell membrane. Antimicrobial peptide that inhibits the growth of Gram-positive (S.aureus, MIC=1 uM) and Gram-negative bacteria (E.coli, MIC=15 uM and P.aeruginosa, MIC=2 uM). It also shows 37% of hemolysis when 15 uM are tested (93% at 50 uM). In Urodacus yaschenkoi (Inland robust scorpion), this protein is Antimicrobial peptide UyCT5.